The primary structure comprises 207 residues: D-aminoacyl-tRNA deacylase 1 (207 aa).

A Gly-cisPro motif, important for rejection of L-amino acids motif is present at residues 139–140 (GP). The disordered stretch occupies residues 142–207 (TIQLESPPAP…EGDVSSEREP (66 aa)). 2 stretches are compositionally biased toward basic and acidic residues: residues 156 to 167 (LLSKQEKQQQRK) and 178 to 189 (SSREKAAQRSKV).

The protein belongs to the DTD family. In terms of assembly, homodimer.

The protein localises to the cytoplasm. It catalyses the reaction a D-aminoacyl-tRNA + H2O = a tRNA + a D-alpha-amino acid + H(+). It carries out the reaction glycyl-tRNA(Ala) + H2O = tRNA(Ala) + glycine + H(+). D-aminoacyl-tRNA deacylase, with no observable activity on tRNAs charged with their cognate L-amino acid. Hydrolyzes correctly charged, achiral, glycyl-tRNA(Gly). Deacylates mischarged D.melanogaster and E.coli glycyl-tRNA(Ala), protecting cells against glycine mischarging by AlaRS. Acts via tRNA-based rather than protein-based catalysis; rejects L-amino acids rather than detecting D-amino acids in the active site. By recycling D-aminoacyl-tRNA to D-amino acids and free tRNA molecules, this enzyme counteracts the toxicity associated with the formation of D-aminoacyl-tRNA entities in vivo and helps enforce protein L-homochirality. The polypeptide is D-aminoacyl-tRNA deacylase 1 (Danio rerio (Zebrafish)).